Reading from the N-terminus, the 846-residue chain is Protein kintoun (846 aa).

Disordered stretches follow at residues 1-21 (MSTA…ERAD), 372-416 (YLSR…PALT), 581-657 (HTSI…DSTI), and 743-846 (HDSS…DDEI). S378 is modified (phosphoserine). Over residues 389–403 (PVEDDADGDMPETPE) the composition is skewed to acidic residues. 2 stretches are compositionally biased toward basic residues: residues 596–612 (LHKK…KKQR) and 750–766 (QRKK…RAQQ). S770 carries the post-translational modification Phosphoserine. Over residues 821–832 (TRQDHADADAKN) the composition is skewed to basic and acidic residues.

It belongs to the PIH1 family. Kintoun subfamily. In terms of assembly, interacts with Pp1alpha-96A, Pp1-87B, Pp1-13C and flw.

The protein localises to the cytoplasm. Required for cytoplasmic pre-assembly of axonemal dyneins, thereby playing a central role in motility in cilia and flagella. Involved in pre-assembly of dynein arm complexes in the cytoplasm before intraflagellar transport loads them for the ciliary compartment. This is Protein kintoun from Drosophila persimilis (Fruit fly).